The following is a 441-amino-acid chain: Nuclear distribution protein nudF (441 aa).

Residues 9-41 enclose the LisH domain; sequence QAEELHKSIIAYLASVNLTESSAALRAELGDSV. 8 WD repeats span residues 87–128, 130–170, 174–221, 224–263, 266–326, 328–367, 372–402, and 403–440; these read GHRE…RTVK, HTKA…KNIR, GHDH…CVKT, GHVD…TKST, GHEH…IKTL, GHDN…KCVR, AHGH…NGAP, and AATA…RIFA. The tract at residues 390–415 is disordered; sequence GGANGESETNGAPAATATTNGVRPDP. A compositionally biased stretch (low complexity) spans 398–410; that stretch reads TNGAPAATATTNG.

This sequence belongs to the WD repeat LIS1/nudF family. In terms of assembly, self-associates. Interacts with nudE and dynein.

The protein resides in the cytoplasm. The protein localises to the cytoskeleton. It localises to the spindle pole. Positively regulates the activity of the minus-end directed microtubule motor protein dynein. May enhance dynein-mediated microtubule sliding by targeting dynein to the microtubule plus end. Required for nuclear migration during vegetative growth as well as development. Required for retrograde early endosome (EE) transport from the hyphal tip. Required for localization of dynein to the mitotic spindle poles. Recruits additional proteins to the dynein complex at SPBs. The protein is Nuclear distribution protein nudF of Neosartorya fischeri (strain ATCC 1020 / DSM 3700 / CBS 544.65 / FGSC A1164 / JCM 1740 / NRRL 181 / WB 181) (Aspergillus fischerianus).